A 360-amino-acid chain; its full sequence is Luc7-like protein (360 aa).

A coiled-coil region spans residues 143-206 (KEQNSKITEL…QEKNENKRMS (64 aa)). The disordered stretch occupies residues 255-360 (LGRTDFYNAP…DDRRKRDRNY (106 aa)). Positions 269–293 (DSYRDDRRSSSSSYHDIDGRRDHRY) are enriched in basic and acidic residues. Over residues 312 to 321 (NNGRGSSRDN) the composition is skewed to low complexity. The span at 329–360 (RDYRNDHGKDYDRKRERDYYNDDDRRKRDRNY) shows a compositional bias: basic and acidic residues.

It belongs to the Luc7 family.

It is found in the nucleus. In terms of biological role, may play a role in RNA splicing. This Dictyostelium discoideum (Social amoeba) protein is Luc7-like protein (crop).